We begin with the raw amino-acid sequence, 424 residues long: MATVPEIKIMRSESLGHRSDVSSPEAKLGMRVEDLWDEQKPQLSPNEKLNACFESIPVSAFPLSSDSQDIEIRSDTSLAEAVQTLSKFKVLSAPVVDVDAPEDASWIDRYIGIVEFPGIVVWLLHQLEPPSPRSPAVAASNGFSHDFTTDVLDNGDSAVTSGNFFEVLTSSELYKNTKVRDISGTFRWAPFLALQKENSFLTMLLLLSKYKMKSIPVVDLGVAKIENIITQSGVIHMLAECAGLLWFEDWGIKTLSEVGLPIMSKDHIIKIYEDEPVLQAFKLMRRKRIGGIPVIERNSEKPVGNISLRDVQFLLTAPEIYHDYRSITTKNFLVSVREHLEKCGDTSAPIMSGVIACTKNHTLKELILMLDAEKIHRIYVVDDFGNLEGLITLRDIIARLVHEPSGYFGDFFDGVMPLPENYRV.

Ala-2 carries the post-translational modification N-acetylalanine. A Phosphoserine modification is found at Ser-44. 4 CBS domains span residues Leu-63 to Ser-131, Thr-185 to Leu-244, Met-263 to Tyr-324, and Ile-350 to Phe-408.

The protein belongs to the 5'-AMP-activated protein kinase gamma subunit family. Subunit of a probable heterotrimeric complex consisting of an alpha catalytic (KIN10 or KIN11) subunit, and a beta (KINB) and a gamma (KING or SNF4) non-catalytic regulatory subunits. Interacts with HXK1 in mitochondrion. Post-translationally, sumoylated by SIZ1. In terms of tissue distribution, expressed in vegetative organs and, to lower extent, in reproductive organs.

It localises to the mitochondrion. Its function is as follows. Regulatory subunit of the probable trimeric SNF1-related protein kinase (SnRK) complex, which may play a role in a signal transduction cascade regulating gene expression and carbohydrate metabolism in higher plants. The SnRK complex may also be involved in the regulation of fatty acid synthesis by phosphorylation of acetyl-CoA carboxylase and in assimilation of nitrogen by phosphorylating nitrate reductase. This is SNF1-related protein kinase regulatory subunit gamma-1 (KING1) from Arabidopsis thaliana (Mouse-ear cress).